We begin with the raw amino-acid sequence, 431 residues long: Reverse prenyltransferase criA (431 aa).

Dimethylallyl diphosphate is bound by residues R104, K193, Y195, K262, Y264, Y347, Y412, and Y416.

This sequence belongs to the tryptophan dimethylallyltransferase family. Monomer.

The catalysed reaction is cyclo(L-tryptophyl-L-alanyl) + dimethylallyl diphosphate = preechinulin + diphosphate. It functions in the pathway secondary metabolite biosynthesis. Its pathway is alkaloid biosynthesis. Functionally, reverse prenyltransferase; part of the gene cluster that mediates the biosynthesis of echinulin family alkaloid. The pathway begins with the biosynthesis of the cyclic dipeptide cyclo-L-Trp-L-Ala (cyclo-TA) by the NRPS criC via condensation of L-alanine and L-tryptophan. The prenyltransferase criA then catalyzes the first prenylation step, a reverse prenylation reaction at C2, to yield preechinulin. Preechinulin is the substrate of the cytochrome P450 monooxygenase criE that catalyzes the formation of the double bond between C10 and C11 to produce neoechulin A. The unique prenyltransferase criF functions as a competitive enzyme with criE for preechinulin metabolization and uses preechinulin for effective regiospecific prenylations. Preechinulin is prenylated by criF at C5 or C7. C7-prenylation leads to accumulation of tardioxopiperazine B without further modification by criF. In contrast, the C5-prenylated tardioxopiperazine A can be prenylated again by criF, predominantly at C7 to form echinulin or less frequently at C4 to give variecolorin L. CriF also accepts neoechilunin A to produce varlecolorin G (prenylation at C5) or isoechinulin A (prenylation at C7). CriF further converts isoechinulin A into dehydroechinulin. Moreover, a yet unidentified enzyme can also convert neoechilunin A into neoechilunin B by introducing a double bond between positions C14 and C17 and thus provides a further substrate to criF for C5 and C7 prenylation. The sequence is that of Reverse prenyltransferase criA from Aspergillus cristatus (Chinese Fuzhuan brick tea-fermentation fungus).